Consider the following 416-residue polypeptide: Heat shock protein DDB_G0280215 (416 aa).

A sHSP domain is found at S37–E150. A disordered region spans residues E216–K235.

It belongs to the small heat shock protein (HSP20) family.

This chain is Heat shock protein DDB_G0280215, found in Dictyostelium discoideum (Social amoeba).